Here is a 2364-residue protein sequence, read N- to C-terminus: Cytotoxin-L (2364 aa).

Residues 1–91 (MNLVNKAQLQ…EVLELKNNSL (91 aa)) are four-helical bundle. The GT44 domain maps to 96 to 468 (KNLHFIWIGG…APDVRSTINL (373 aa)). Positions 96 to 468 (KNLHFIWIGG…APDVRSTINL (373 aa)) are glucosyltransferase region. UDP-alpha-D-glucose-binding positions include 101–103 (IWI), Asn-139, 265–270 (LAAASD), and 286–288 (DVD). The Mg(2+) site is built by Asp-288, Glu-515, and Ser-518. Residue 518–520 (SLW) participates in UDP-alpha-D-glucose binding. The interval 544–799 (GEDDNLDFAQ…KSKYLHELST (256 aa)) is autoprocessing region. Residues Glu-545 and Asp-546 each contribute to the Zn(2+) site. The 208-residue stretch at 567–774 (LSSMKTRNKE…EESIIKDISS (208 aa)) folds into the Peptidase C80 domain. 3 residues coordinate 1D-myo-inositol hexakisphosphate: Tyr-577, Lys-600, and Lys-647. His-653 contributes to the Zn(2+) binding site. The active-site For protease activity is the His-653. Cys-698 (nucleophile; for protease activity) is an active-site residue. His-757 is a binding site for Zn(2+). 1D-myo-inositol hexakisphosphate contacts are provided by Lys-764, Lys-775, and Lys-792. A translocation region region spans residues 800 to 1500 (LLQEIRNNAN…ESIIRNIYMP (701 aa)). Interaction with host SEMA6A and SEMA6B stretches follow at residues 1433–1438 (CMKLIE), 1466–1471 (DNETKY), 1484–1495 (FTAEFSNESIIR), 1504–1511 (NLFIYSSK), and 1596–1601 (YNNLDP). Cell wall-binding repeat units follow at residues 1813-1832 (EFGL…FGNM), 1833-1852 (VSGL…PKNN), 1854-1873 (ITGF…TKSG), 1876-1895 (SIGE…QGIL), 1926-1945 (FIGK…NYRA), 1946-1965 (AVEW…KTGE), 1967-1986 (LKGL…NGIM), 1987-2006 (QTGF…DGVM), 2007-2026 (QVGY…NGER), 2057-2076 (YNGI…SNTA), 2077-2097 (VVGW…NRAE), 2099-2118 (CIGL…NGIR), 2119-2138 (QLGF…SGKI), 2139-2158 (ELGY…SGLV), 2209-2224 (ETGW…YFDP), 2227-2249 (KKAY…NGIM), 2250-2269 (RTGL…DGKM), 2270-2289 (QFGY…DGKM), 2320-2339 (YTGW…EYIA), and 2340-2359 (ATGS…DTAE). Residues 1835–2364 (GLIYINDSLY…PDTAELVVSE (530 aa)) are receptor-binding (CROPS) region.

The protein belongs to the clostridial glucosylating toxin (LCGT) family. Homomultimer; forms an inactive homomultimer at pH 8, which dissociates at pH 4, leading to cytotoxicity. Interacts with host SEMA6A; interaction promotes toxin entry into host cell. Interacts with host SEMA6B; interaction promotes toxin entry into host cell. Requires Zn(2+) as cofactor. Mn(2+) is required as a cofactor. Mg(2+) serves as cofactor. Undergoes autocatalytic cleavage to release the N-terminal part (Glucosyltransferase TcsL), which constitutes the active part of the toxin, in the host cytosol. 1D-myo-inositol hexakisphosphate-binding (InsP6) activates the peptidase C80 domain and promotes autoprocessing.

The protein localises to the secreted. The protein resides in the host endosome membrane. Its subcellular location is the host cytoplasm. It localises to the host cytosol. It is found in the host cell membrane. It carries out the reaction L-threonyl-[protein] + UDP-alpha-D-glucose = 3-O-(alpha-D-glucosyl)-L-threonyl-[protein] + UDP + H(+). Protease activity is activated upon binding to 1D-myo-inositol hexakisphosphate (InsP6), which induces conformational reorganization. Its function is as follows. Precursor of a cytotoxin that targets the vascular endothelium, inducing an anti-inflammatory effect and resulting in lethal toxic shock syndrome. TcsL constitutes the main toxin that mediates the pathology of P.sordellii infection, an anaerobic Gram-positive bacterium found in soil and in the gastrointestinal and vaginal tracts of animals and humans; although the majority of carriers are asymptomatic, pathogenic P.sordellii infections arise rapidly and are highly lethal. This form constitutes the precursor of the toxin: it enters into host cells and mediates autoprocessing to release the active toxin (Glucosyltransferase TcsL) into the host cytosol. Targets vascular endothelium by binding to the semaphorin proteins SEMA6A and SEMA6B, and enters host cells via clathrin-mediated endocytosis. Once entered into host cells, acidification in the endosome promotes the membrane insertion of the translocation region and formation of a pore, leading to translocation of the GT44 and peptidase C80 domains across the endosomal membrane. This activates the peptidase C80 domain and autocatalytic processing, releasing the N-terminal part (Glucosyltransferase TcsL), which constitutes the active part of the toxin, in the cytosol. In terms of biological role, active form of the toxin, which is released into the host cytosol following autoprocessing and inactivates small GTPases. Acts by mediating monoglucosylation of small GTPases of the Ras (H-Ras/HRAS, K-Ras/KRAS, N-Ras/NRAS and Ral/RALA) family in host cells at the conserved threonine residue located in the switch I region ('Thr-37/35'), using UDP-alpha-D-glucose as the sugar donor. Also able to catalyze monoglucosylation of some members of the Rho family (Rac1 and Rap2A), but with less efficiency than with Ras proteins. Monoglucosylation of host small GTPases completely prevents the recognition of the downstream effector, blocking the GTPases in their inactive form and leading to apoptosis. Induces an anti-inflammatory effect, mainly by inactivating Ras proteins which results in blockage of the cell cycle and killing of immune cells. The absence or moderate local inflammatory response allows C.sordellii spreading in deep tissues, production of toxin which is released in the general circulation and causes a toxic shock syndrome. This chain is Cytotoxin-L, found in Paraclostridium sordellii (Clostridium sordellii).